The following is a 33-amino-acid chain: GCTKFMGSCKTDADCCEHLECYKYKWCGWDGTF.

Intrachain disulfides connect Cys2/Cys16, Cys9/Cys21, and Cys15/Cys27. Position 33 is a phenylalanine amide (Phe33).

In terms of tissue distribution, expressed by the venom gland.

The protein localises to the secreted. In terms of biological role, gating-modifier toxin with very weak activity on Nav1.7/SCN9A and Nav1.8/SCN10A. Shows 22% peak current inhibition (at 10 uM) on Nav1.8/SCN10A sodium channels. Show peak current inhibition and delays fast inactivation on Nav1.7/SCN9A (EC(50)&gt;10 uM). The chain is Mu/delta-theraphotoxin-Pm2a from Poecilotheria metallica (Metallic blue ornamental tree spider).